The sequence spans 504 residues: Sperm motility kinase 3A (504 aa).

The 249-residue stretch at 28–276 (YVMLETIGHG…VAEVMVHPWV (249 aa)) folds into the Protein kinase domain. ATP is bound by residues 34-42 (IGHGGCATV) and lysine 57. The active-site Proton acceptor is aspartate 147. Residues 294 to 334 (KPDPAIVKAMGHIGFQAQDIEDSLRQRKFNQTMASYCLLKK) form the UBA domain. Disordered stretches follow at residues 389 to 421 (VCGK…MDHT) and 441 to 468 (NSSE…WPRG). A compositionally biased stretch (polar residues) spans 441–451 (NSSEESTQGHT).

It belongs to the protein kinase superfamily. CAMK Ser/Thr protein kinase family. Smok subfamily. As to expression, testis-specific. Expressed in the testis from 22 days postpartum (22 dpp).

The catalysed reaction is L-seryl-[protein] + ATP = O-phospho-L-seryl-[protein] + ADP + H(+). The enzyme catalyses L-threonyl-[protein] + ATP = O-phospho-L-threonyl-[protein] + ADP + H(+). May play a role in sperm motility, especially in the regulation of flagellar function. This is Sperm motility kinase 3A from Mus musculus (Mouse).